Consider the following 182-residue polypeptide: Bis(5'-nucleosyl)-tetraphosphatase [asymmetrical] (182 aa).

An HIT domain is found at 3–110; it reads KQLYFSKFPV…IPRKKADFSE (108 aa). Substrate-binding positions include Asn-28, Gln-84, and 90-93; that span reads GQTV. A Histidine triad motif motif is present at residues 95 to 99; sequence HVHVH. His-97 (tele-AMP-histidine intermediate) is an active-site residue. His-99 serves as a coordination point for substrate. The disordered stretch occupies residues 135–161; sequence RYAGDERPPTSMRQAIPKDEDRKPRTL. Residues 150–161 show a composition bias toward basic and acidic residues; the sequence is IPKDEDRKPRTL.

The catalysed reaction is P(1),P(4)-bis(5'-guanosyl) tetraphosphate + H2O = GMP + GTP + 2 H(+). Its function is as follows. Asymmetrically hydrolyzes Ap4A to yield AMP and ATP. The chain is Bis(5'-nucleosyl)-tetraphosphatase [asymmetrical] (aph1) from Schizosaccharomyces pombe (strain 972 / ATCC 24843) (Fission yeast).